The chain runs to 354 residues: Lysophosphatidic acid receptor 3 (354 aa).

Over 1-31 (MNECHYDKRMDFFYNRSNTDTADEWTGTKLV) the chain is Extracellular. Asn15 carries an N-linked (GlcNAc...) asparagine glycan. The chain crosses the membrane as a helical span at residues 32-52 (IVLCVGTFFCLFIFFSNSLVI). The Cytoplasmic portion of the chain corresponds to 53-67 (AAVITNRKFHFPFYY). The chain crosses the membrane as a helical span at residues 68–88 (LLANLAAADFFAGIAYVFLMF). The Extracellular portion of the chain corresponds to 89–101 (NTGPVSKTLTVNR). A helical transmembrane segment spans residues 102-124 (WFLRQGLLDTSLTASLANLLVIA). The Cytoplasmic segment spans residues 125 to 146 (VERHMSIMRMRVHSNLTKKRVT). Residues 147-167 (LLILLVWAIAIFMGAVPTLGW) traverse the membrane as a helical segment. Residues 168-186 (NCLCNISACSSLAPIYSRS) are Extracellular-facing. Asn172 is a glycosylation site (N-linked (GlcNAc...) asparagine). A helical membrane pass occupies residues 187-207 (YLIFWTVSNLLAFFIMVAVYV). Over 208–240 (RIYMYVKRKTNVLSPHTSGSISRRRAPMKLMKT) the chain is Cytoplasmic. A helical transmembrane segment spans residues 241-261 (VMTVLGAFVVCWTPGLVVLLL). Residues 262 to 276 (DGLNCKQCNVQHVKR) are Extracellular-facing. Residues 277-295 (WFLLLALLNSVMNPIIYSY) form a helical membrane-spanning segment. Over 296 to 354 (KDEDMYNTMRKMICCALQDSNTERRPSRNPSTIHSRSETGSQYLEDSISQGPVCNKNGS) the chain is Cytoplasmic. Cys309 is lipidated: S-palmitoyl cysteine. The interval 315–354 (SNTERRPSRNPSTIHSRSETGSQYLEDSISQGPVCNKNGS) is disordered. A compositionally biased stretch (polar residues) spans 323–354 (RNPSTIHSRSETGSQYLEDSISQGPVCNKNGS).

The protein belongs to the G-protein coupled receptor 1 family. As to expression, most abundantly expressed in testes, kidney, and lung, with moderate levels in small intestine, and low levels in heart, stomach, spleen, and adult and perinatal brain. Little or no expression in embryonic brain, liver, or thymus.

The protein localises to the cell membrane. Its function is as follows. Receptor for lysophosphatidic acid (LPA), a mediator of diverse cellular activities. Seems to be coupled to the G(i)/G(o) and G(q) families of heteromeric G proteins. The chain is Lysophosphatidic acid receptor 3 (Lpar3) from Mus musculus (Mouse).